The sequence spans 293 residues: Ribosomal RNA small subunit methyltransferase A (293 aa).

6 residues coordinate S-adenosyl-L-methionine: Asn29, Leu31, Gly56, Glu77, Asp102, and Asn127.

The protein belongs to the class I-like SAM-binding methyltransferase superfamily. rRNA adenine N(6)-methyltransferase family. RsmA subfamily.

It is found in the cytoplasm. It catalyses the reaction adenosine(1518)/adenosine(1519) in 16S rRNA + 4 S-adenosyl-L-methionine = N(6)-dimethyladenosine(1518)/N(6)-dimethyladenosine(1519) in 16S rRNA + 4 S-adenosyl-L-homocysteine + 4 H(+). Specifically dimethylates two adjacent adenosines (A1518 and A1519) in the loop of a conserved hairpin near the 3'-end of 16S rRNA in the 30S particle. May play a critical role in biogenesis of 30S subunits. This Geobacillus kaustophilus (strain HTA426) protein is Ribosomal RNA small subunit methyltransferase A.